A 773-amino-acid polypeptide reads, in one-letter code: MSVAEIEEGVFEATVTIDNGSFGTRAIRFETGRLALQAAGAVVAYLDADNMLLSATTASKNPKEQFDFFPLTVDVEERMYAAGRIPGSFFRREGRPSTDAILTCRLIDRPLRPSFVDGLRNEIQVVVTILSVDPNDLYDVLAINAASASTQLGGLPFSGPIGGVRVALIDGTWVAFPTVEQLERAVFDMVIAGRIVGTDDEGKPDVAIMMVEAEATENVIELVECGAQAPTESIVAQGLEVAKPFIAALCTAQQELADVVSSRQAKPPVEYPTFPDYGDDVYYSVASMATDELAAALTIGAKLERDQRTNEIKTQVLERLAGTYEGREKELGAAFRSLTKKLVRQRILTNHFRIDGRGITDIRALSAEVAVVPRAHGSALFERGETQILGVTTLDMVKMAQQIDSLGPETSKRYMHHYNFPPFSTGETGRVGSPKRREIGHGALAERALVPVLPSVEEFPYAIRQVSEALGSNGSTSMGSVCASTLALLNAGVPLKAPVAGIAMGLVSDDVEFDGGTERRFVTLTDILGAEDAFGDMDFKCAGTKDFVTALQLDTKLDGIPSQVLAGALAQAKDARLTILEVMAEAIDRPDEMSPYAPRVITIKVPVDKIGEVIGPKGKVINAITEETGAQISIEDDGTVFVGATDGLSAQAAINKINAIANPQLPTVGERFLGTVVKITEFGAFVSLLPGRDGLVHISKLGKGKRIAKVEDVVNVGDKLRVEIADIEKRGKISLVLVADDDSATVPAAPADAGAAQEFGSGTAPADAATASS.

The Mg(2+) site is built by aspartate 532 and aspartate 538. In terms of domain architecture, KH spans 598-657 (PRVITIKVPVDKIGEVIGPKGKVINAITEETGAQISIEDDGTVFVGATDGLSAQAAINKI). Residues 669-738 (GERFLGTVVK…KRGKISLVLV (70 aa)) form the S1 motif domain. The tract at residues 749-773 (APADAGAAQEFGSGTAPADAATASS) is disordered.

Belongs to the polyribonucleotide nucleotidyltransferase family. Mg(2+) is required as a cofactor.

It is found in the cytoplasm. It catalyses the reaction RNA(n+1) + phosphate = RNA(n) + a ribonucleoside 5'-diphosphate. In terms of biological role, involved in mRNA degradation. Catalyzes the phosphorolysis of single-stranded polyribonucleotides processively in the 3'- to 5'-direction. This chain is Polyribonucleotide nucleotidyltransferase, found in Mycobacterium leprae (strain Br4923).